Here is a 264-residue protein sequence, read N- to C-terminus: 3-methyl-2-oxobutanoate hydroxymethyltransferase (264 aa).

Mg(2+) is bound by residues Asp46 and Asp85. 3-methyl-2-oxobutanoate contacts are provided by residues 46–47 (DS), Asp85, and Lys113. Residue Glu115 coordinates Mg(2+). The active-site Proton acceptor is Glu181.

This sequence belongs to the PanB family. As to quaternary structure, homodecamer; pentamer of dimers. Mg(2+) serves as cofactor.

It is found in the cytoplasm. It carries out the reaction 3-methyl-2-oxobutanoate + (6R)-5,10-methylene-5,6,7,8-tetrahydrofolate + H2O = 2-dehydropantoate + (6S)-5,6,7,8-tetrahydrofolate. It participates in cofactor biosynthesis; (R)-pantothenate biosynthesis; (R)-pantoate from 3-methyl-2-oxobutanoate: step 1/2. Its function is as follows. Catalyzes the reversible reaction in which hydroxymethyl group from 5,10-methylenetetrahydrofolate is transferred onto alpha-ketoisovalerate to form ketopantoate. This is 3-methyl-2-oxobutanoate hydroxymethyltransferase from Salmonella typhi.